Reading from the N-terminus, the 291-residue chain is Protease HtpX homolog (291 aa).

The next 2 helical transmembrane spans lie at I4–L24 and G39–I59. Residue H144 coordinates Zn(2+). E145 is a catalytic residue. Residue H148 participates in Zn(2+) binding. 2 helical membrane-spanning segments follow: residues L159 to I179 and I199 to F219. E224 is a Zn(2+) binding site.

Belongs to the peptidase M48B family. The cofactor is Zn(2+).

The protein localises to the cell inner membrane. This Albidiferax ferrireducens (strain ATCC BAA-621 / DSM 15236 / T118) (Rhodoferax ferrireducens) protein is Protease HtpX homolog.